The sequence spans 476 residues: Exodeoxyribonuclease 7 large subunit (476 aa).

Belongs to the XseA family. Heterooligomer composed of large and small subunits.

The protein localises to the cytoplasm. The catalysed reaction is Exonucleolytic cleavage in either 5'- to 3'- or 3'- to 5'-direction to yield nucleoside 5'-phosphates.. Functionally, bidirectionally degrades single-stranded DNA into large acid-insoluble oligonucleotides, which are then degraded further into small acid-soluble oligonucleotides. The sequence is that of Exodeoxyribonuclease 7 large subunit from Bartonella tribocorum (strain CIP 105476 / IBS 506).